Here is a 272-residue protein sequence, read N- to C-terminus: Secretagogin (272 aa).

EF-hand domains are found at residues 8 to 43, 53 to 89, 101 to 136, 145 to 180, 193 to 228, and 237 to 272; these read LDAA…MLKK, ERVQ…QEEN, DNSV…LFLQ, KLDE…QENF, ERKR…MMEL, and DLDK…KHKP. Ca(2+) contacts are provided by Asp21, Asp23, Asn25, Tyr27, and Glu32. Ca(2+)-binding residues include Asp114, Asp116, Ser118, Tyr120, Glu125, Asp158, Asn160, Asp162, Arg164, Asp169, Asp206, Ser208, Thr210, Glu217, Asp250, Asn252, Asp254, Lys256, and Glu261.

The protein localises to the cytoplasm. This chain is Secretagogin (scgn), found in Danio rerio (Zebrafish).